The primary structure comprises 177 residues: Large ribosomal subunit protein uL6 (177 aa).

The protein belongs to the universal ribosomal protein uL6 family. As to quaternary structure, part of the 50S ribosomal subunit.

Functionally, this protein binds to the 23S rRNA, and is important in its secondary structure. It is located near the subunit interface in the base of the L7/L12 stalk, and near the tRNA binding site of the peptidyltransferase center. The polypeptide is Large ribosomal subunit protein uL6 (Verminephrobacter eiseniae (strain EF01-2)).